The chain runs to 368 residues: NAD(P)H-quinone oxidoreductase subunit 1, chloroplastic (368 aa).

Transmembrane regions (helical) follow at residues 11-31 (RVIN…LIWI), 33-53 (IYIL…VWLE), 98-118 (WLFS…YLVI), 131-151 (IGVF…LMAG), 177-197 (LALC…VDIV), 205-225 (FWGW…ISSL), 255-275 (FGLF…FVTI), 305-325 (VLGI…FLFI), and 348-368 (FLLP…LLLL).

It belongs to the complex I subunit 1 family. NDH is composed of at least 16 different subunits, 5 of which are encoded in the nucleus.

It localises to the plastid. The protein localises to the chloroplast thylakoid membrane. The catalysed reaction is a plastoquinone + NADH + (n+1) H(+)(in) = a plastoquinol + NAD(+) + n H(+)(out). The enzyme catalyses a plastoquinone + NADPH + (n+1) H(+)(in) = a plastoquinol + NADP(+) + n H(+)(out). In terms of biological role, NDH shuttles electrons from NAD(P)H:plastoquinone, via FMN and iron-sulfur (Fe-S) centers, to quinones in the photosynthetic chain and possibly in a chloroplast respiratory chain. The immediate electron acceptor for the enzyme in this species is believed to be plastoquinone. Couples the redox reaction to proton translocation, and thus conserves the redox energy in a proton gradient. The chain is NAD(P)H-quinone oxidoreductase subunit 1, chloroplastic from Cycas taitungensis (Prince sago).